We begin with the raw amino-acid sequence, 316 residues long: MAEQLILKGTLEGHNGWVTSLATSLENPNMLLSGSRDKSLIIWNLTRDETSYGYPKRRLHGHSHIVSDCVISSDGAYALSASWDKTLRLWELSTGTTTRRFVGHTNDVLSVSFSADNRQIVSGSRDRTIKLWNTLGDCKFTITEKGHTEWVSCVRFSPNPQNPVIVSSGWDKLVKVWELSSCKLQTDHIGHTGYINAVTISPDGSLCASGGKDGTTMLWDLNESKHLYSLNANDEIHALVFSPNRYWLCAATSSSIIIFDLEKKSKVDELKPEFQNIGKKSREPECVSLAWSADGQTLFAGYTDNIIRAWGVMSRA.

WD repeat units lie at residues 13–44 (GHNG…IIWN), 61–91 (GHSH…RLWE), 103–133 (GHTN…KLWN), 146–178 (GHTE…KVWE), 190–220 (GHTG…MLWD), 231–260 (NAND…IIFD), and 281–311 (SREP…RAWG).

It belongs to the WD repeat G protein beta family. Ribosomal protein RACK1 subfamily. As to quaternary structure, component of the small ribosomal subunit (SSU). Mature N.crassa ribosomes consist of a small (40S) and a large (60S) subunit. The 40S small subunit contains 1 molecule of ribosomal RNA (18S rRNA) and at least 32 different proteins. The large 60S subunit contains 3 rRNA molecules (26S, 5.8S and 5S rRNA) and at least 42 different proteins.

The protein localises to the cytoplasm. Functionally, component of the ribosome, a large ribonucleoprotein complex responsible for the synthesis of proteins in the cell. The small ribosomal subunit (SSU) binds messenger RNAs (mRNAs) and translates the encoded message by selecting cognate aminoacyl-transfer RNA (tRNA) molecules. The large subunit (LSU) contains the ribosomal catalytic site termed the peptidyl transferase center (PTC), which catalyzes the formation of peptide bonds, thereby polymerizing the amino acids delivered by tRNAs into a polypeptide chain. The nascent polypeptides leave the ribosome through a tunnel in the LSU and interact with protein factors that function in enzymatic processing, targeting, and the membrane insertion of nascent chains at the exit of the ribosomal tunnel. Required to activate general amino acid control under conditions of amino acid limitation in the vegetative growth phase, and for formation of protoperithecia in preparation for the sexual phase of the life cycle of N.crassa. The protein is Small ribosomal subunit protein RACK1 (cpc-2) of Neurospora crassa (strain ATCC 24698 / 74-OR23-1A / CBS 708.71 / DSM 1257 / FGSC 987).